Reading from the N-terminus, the 155-residue chain is Small ribosomal subunit protein uS7c (155 aa).

This sequence belongs to the universal ribosomal protein uS7 family. As to quaternary structure, part of the 30S ribosomal subunit.

The protein localises to the plastid. The protein resides in the chloroplast. In terms of biological role, one of the primary rRNA binding proteins, it binds directly to 16S rRNA where it nucleates assembly of the head domain of the 30S subunit. The sequence is that of Small ribosomal subunit protein uS7c (rps7) from Staurastrum punctulatum (Green alga).